The primary structure comprises 306 residues: Ornithine carbamoyltransferase (306 aa).

Carbamoyl phosphate-binding positions include 50–53 (STRT), Gln-77, Arg-101, and 128–131 (HPCQ). L-ornithine-binding positions include Asn-160, Asp-224, and 228 to 229 (SM). Residues 261–262 (CL) and Arg-289 each bind carbamoyl phosphate.

The protein belongs to the aspartate/ornithine carbamoyltransferase superfamily. OTCase family.

It is found in the cytoplasm. The catalysed reaction is carbamoyl phosphate + L-ornithine = L-citrulline + phosphate + H(+). It participates in amino-acid biosynthesis; L-arginine biosynthesis; L-arginine from L-ornithine and carbamoyl phosphate: step 1/3. Reversibly catalyzes the transfer of the carbamoyl group from carbamoyl phosphate (CP) to the N(epsilon) atom of ornithine (ORN) to produce L-citrulline. This chain is Ornithine carbamoyltransferase, found in Aquifex aeolicus (strain VF5).